Here is a 343-residue protein sequence, read N- to C-terminus: S-adenosylmethionine:tRNA ribosyltransferase-isomerase (343 aa).

The protein belongs to the QueA family. In terms of assembly, monomer.

It is found in the cytoplasm. The catalysed reaction is 7-aminomethyl-7-carbaguanosine(34) in tRNA + S-adenosyl-L-methionine = epoxyqueuosine(34) in tRNA + adenine + L-methionine + 2 H(+). It functions in the pathway tRNA modification; tRNA-queuosine biosynthesis. Functionally, transfers and isomerizes the ribose moiety from AdoMet to the 7-aminomethyl group of 7-deazaguanine (preQ1-tRNA) to give epoxyqueuosine (oQ-tRNA). The polypeptide is S-adenosylmethionine:tRNA ribosyltransferase-isomerase (Coxiella burnetii (strain RSA 331 / Henzerling II)).